A 526-amino-acid chain; its full sequence is Probable feruloyl esterase B-2 (526 aa).

A signal peptide spans Met-1–Ala-19. 2 cysteine pairs are disulfide-bonded: Cys-28-Cys-75 and Cys-63-Cys-114. 4 N-linked (GlcNAc...) asparagine glycosylation sites follow: Asn-53, Asn-85, Asn-98, and Asn-138. 3 disulfide bridges follow: Cys-187–Cys-441, Cys-256–Cys-273, and Cys-282–Cys-291. Ser-188 serves as the catalytic Acyl-ester intermediate. N-linked (GlcNAc...) asparagine glycosylation is present at Asn-246. Residues Asp-257, Asp-260, Ala-262, Asp-264, and Ile-266 each contribute to the Ca(2+) site. N-linked (GlcNAc...) asparagine glycans are attached at residues Asn-287 and Asn-311. Residues Asp-400 and His-440 each act as charge relay system in the active site. N-linked (GlcNAc...) asparagine glycans are attached at residues Asn-490 and Asn-516. A disulfide bond links Cys-503 and Cys-525.

The protein belongs to the tannase family.

Its subcellular location is the secreted. It carries out the reaction feruloyl-polysaccharide + H2O = ferulate + polysaccharide.. Its function is as follows. Involved in degradation of plant cell walls. Hydrolyzes the feruloyl-arabinose ester bond in arabinoxylans as well as the feruloyl-galactose and feruloyl-arabinose ester bonds in pectin. This is Probable feruloyl esterase B-2 (faeB-2) from Aspergillus oryzae (strain ATCC 42149 / RIB 40) (Yellow koji mold).